The primary structure comprises 470 residues: Nuclear receptor ROR-beta (470 aa).

The segment at residues 18-93 (VIPCKICGDK…LGMSRDAVKF (76 aa)) is a DNA-binding region (nuclear receptor). 2 consecutive NR C4-type zinc fingers follow at residues 21–41 (CKICGDKSSGIHYGVITCEGC) and 57–81 (CPRQRNCLIDRTNRNRCQHCRLQKC). The span at 104 to 117 (LYAEVQKHQQRLQE) shows a compositional bias: basic and acidic residues. A disordered region spans residues 104 to 127 (LYAEVQKHQQRLQEQRQQQSGEAE). An NR LBD domain is found at 222 to 460 (EIDRIAQNII…TLFPPLYKEL (239 aa)). The AF-2 signature appears at 456–461 (LYKELF).

This sequence belongs to the nuclear hormone receptor family. NR1 subfamily. Monomer. Interacts with CRX. Isoform 2 expressed with circadian rhythm in eye and pineal gland. Isoform 1 expressed in retina cortex, thalamus, and hypothalamus.

The protein resides in the nucleus. Its subcellular location is the nucleoplasm. Nuclear receptor that binds DNA as a monomer to ROR response elements (RORE) containing a single core motif half-site 5'-AGGTCA-3' preceded by a short A-T-rich sequence. Considered to have intrinsic transcriptional activity, have some natural ligands such as all-trans retinoic acid (ATRA) and other retinoids which act as inverse agonists repressing the transcriptional activity. Required for normal postnatal development of rod and cone photoreceptor cells. Modulates rod photoreceptors differentiation at least by inducing the transcription factor NRL-mediated pathway. In cone photoreceptor cells, regulates transcription of OPN1SW. Involved in the regulation of the period length and stability of the circadian rhythm. May control cytoarchitectural patterning of neocortical neurons during development. May act in a dose-dependent manner to regulate barrel formation upon innervation of layer IV neurons by thalamocortical axons. May play a role in the suppression of osteoblastic differentiation through the inhibition of RUNX2 transcriptional activity. Functionally, critical for hindlimb motor control and for the differentiation of amacrine and horizontal cells in the retina. Regulates the expression of PTF1A synergistically with FOXN4. In Rattus norvegicus (Rat), this protein is Nuclear receptor ROR-beta (Rorb).